Here is a 411-residue protein sequence, read N- to C-terminus: Putative ion-transport protein YfeO (411 aa).

The next 11 membrane-spanning stretches (helical) occupy residues 9–29 (MLLLSLPALIIGVASSLVLIA), 54–74 (DSPFWIVGMLTLTGVVVGLII), 99–119 (ALPGLLLALIIGLAGGVSLGP), 149–169 (ILASAGTIGALFGTPVAAALI), 186–206 (LFAPLMAAAAGSLTTSLFFHP), 223–243 (IASGAIVAAIAIAAGMVAVWC), 258–278 (VLILGIGGFILGILGVIGGPL), 296–316 (LGAGDYFTLAVVKLAALVIAA), 322–342 (GGRIFPAVFIGAALGLMLHAH), 343–363 (VEAVPAAITVSCAILGLVLVV), and 386–406 (LLCIVMLPAWLLLAGKPLLAA).

It belongs to the chloride channel (TC 2.A.49) family.

It localises to the cell membrane. The sequence is that of Putative ion-transport protein YfeO from Salmonella choleraesuis (strain SC-B67).